The following is a 525-amino-acid chain: MAVWRSCLRASSSRHRLSSLFFSHHLKPSSFISHSPPLFSPSPSPSPTCFSPLHRLLSSGPEFPIGSQEIIPTDDSSLPVLAVVDFLEGFHEFTGLPWWMIIASSTVAVRLALLPLLILQLKKLKTISELLPKLPMPIPETPTLKGSIDQFSHFLKESRAIGCPSFLWFFPYLSVQLPCFFLLMASIRKMSLDGHPGFDSGGVLWFQNLSDLPGGSFGPVFPILIATFHYINIQISFDTSTIRQTTGLTGLLMRYYKLYLEILSVPLFFVGYAIPQGSLVYWVTNSSVNIFQQLSLKHPTVGAKLGLLSQGATPGMGHSMEISESVIKYVDSDSKEQTLSLQTLTPEELLSLSVQVLSKGDKETSIQLLRLALEKDPGYVRGLVLMGQALLQKTQLSEATEYLELAISKLLDEDPSDAEDVELLMLASQWAGAAYVQQGKLKSGIIHLERVAKLREPGDPKSKEHYFEALLLLSSALYKEGQSDEAAKILRVVVDHNPAYKPLLEQCEDENELVSDLVSRRKDHF.

A run of 4 helical transmembrane segments spans residues 99 to 119 (WMII…LLIL), 167 to 187 (LWFF…MASI), 217 to 237 (FGPV…QISF), and 262 to 282 (ILSV…LVYW). TPR repeat units follow at residues 346 to 379 (PEEL…DPGY), 380 to 413 (VRGL…LLDE), 425 to 458 (MLAS…REPG), and 467 to 500 (FEAL…NPAY).

It belongs to the OXA1/ALB3/YidC (TC 2.A.9.2) family.

Its subcellular location is the plastid. It is found in the chloroplast thylakoid membrane. Functionally, probably required for the insertion of integral membrane proteins into the chloroplast thylakoid membranes. This is ALBINO3-like protein 2, chloroplastic (ALB3L2) from Arabidopsis thaliana (Mouse-ear cress).